The sequence spans 387 residues: BarH-like 2 homeobox protein (387 aa).

Disordered stretches follow at residues methionine 1 to lysine 145, cysteine 157 to serine 240, and proline 367 to arginine 387. Over residues serine 7–serine 24 the composition is skewed to polar residues. The segment covering alanine 100–glutamine 113 has biased composition (low complexity). Pro residues predominate over residues proline 114–glutamine 126. Low complexity predominate over residues glutamine 127–serine 141. The segment covering tyrosine 160–valine 178 has biased composition (polar residues). Basic and acidic residues predominate over residues glutamate 180–serine 220. The segment at residues proline 232 to threonine 291 is a DNA-binding region (homeobox).

This sequence belongs to the BAR homeobox family.

It localises to the nucleus. Its function is as follows. Potential regulator of neural basic helix-loop-helix genes. This Homo sapiens (Human) protein is BarH-like 2 homeobox protein (BARHL2).